The following is a 354-amino-acid chain: Multiple sugar-binding periplasmic receptor ChvE (354 aa).

The signal sequence occupies residues Met1–Ala25.

This sequence belongs to the bacterial solute-binding protein 2 family.

The protein localises to the periplasm. Its function is as follows. Required for effective transcriptional induction of the vir genes by monosaccharides in response to plant signals and for normal growth and chemotaxis towards certain sugars. Functions as a periplasmic multiple sugar-binding receptor protein. It does not interact with a transport system. This Rhizobium radiobacter (Agrobacterium tumefaciens) protein is Multiple sugar-binding periplasmic receptor ChvE (chvE).